The following is a 709-amino-acid chain: Mucin-20 (709 aa).

The first 25 residues, 1 to 25 (MGCLWGLALPLFFFCWEVGVSGSSA), serve as a signal peptide directing secretion. Residues 57–69 (TQTLSAETSSRAS) are compositionally biased toward polar residues. Disordered regions lie at residues 57–92 (TQTLSAETSSRASTPAGPIPEAETRGAKRISPARET) and 170–403 (KGLS…WSPG). Residues 78–92 (AETRGAKRISPARET) are compositionally biased toward basic and acidic residues. Low complexity-rich tracts occupy residues 173 to 182 (SSESSASSDS), 190 to 199 (SRASESSASS), 209 to 218 (SRASESSASS), 228 to 237 (SRASESSASS), 247 to 256 (SRASESSASS), 266 to 275 (SRASESSASS), 285 to 294 (SRASESSASS), 304 to 313 (SRASESSASS), 323 to 332 (SRASESSASS), 342 to 351 (SRASESSASS), 361 to 370 (SRASESSASS), and 380 to 389 (SRASESSASS). 11 consecutive repeat copies span residues 173–192 (SSESSASSDSPHPVITPSRA), 193–211 (SESSASSDGPHPVITPSRA), 212–230 (SESSASSDGPHPVITPSRA), 231–249 (SESSASSDGPHPVITPSRA), 250–268 (SESSASSDGPHPVITPSRA), 269–287 (SESSASSDGPHPVITPSRA), 288–306 (SESSASSDGPHPVITPSRA), 307–325 (SESSASSDGPHPVITPSRA), 326–344 (SESSASSDGPHPVITPSRA), 345–363 (SESSASSDGLHPVITPSRA), and 364–382 (SESSASSDGPHPVITPSRA). The interval 173-400 (SSESSASSDS…GPHPVITPSW (228 aa)) is 12 X 20 AA approximate tandem repeats of S-S-E-S-S-A-S-S-D-S-P-H-P-V-I-T-P-S-R-A. A 12; approximate repeat occupies 383–400 (SESSASSDGPHPVITPSW). An N-linked (GlcNAc...) asparagine glycan is attached at N423. Disordered regions lie at residues 434 to 515 (SSIP…APGA) and 583 to 657 (NFTP…VSAG). The interval 450–656 (VKASSTSDPP…RTRPTTDVSA (207 aa)) is involved in oligomerization. The span at 474–489 (VTASAETLSTAGTTES) shows a compositional bias: polar residues. A compositionally biased stretch (low complexity) spans 613-652 (TTTNSSRGTNSTLAKITTSAKTTMKPPTATPTTARTRPTT). N-linked (GlcNAc...) asparagine glycosylation is found at N616 and N622. Residues 657 to 709 (GENGGFLLLRLSVASPEDLTDPRVAERLMQQLHRELHAHAPHFQVSLLRVRRG) are interaction with MET.

As to quaternary structure, interacts with MET; oligomerization increases affinity for MET. Highly expressed in kidney, moderately in placenta, lung, prostate, liver, and digestive system. In the kidney, localized in the proximal tubules but not in the glomerulus or distal tubules. Detected in most of the male urogenital tract epithelia, with the exception of epididymis.

The protein localises to the secreted. It is found in the apical cell membrane. It localises to the basolateral cell membrane. Its subcellular location is the cell projection. The protein resides in the microvillus membrane. May regulate MET signaling cascade. Seems to decrease hepatocyte growth factor (HGF)-induced transient MAPK activation. Blocks GRB2 recruitment to MET thus suppressing the GRB2-RAS pathway. Inhibits HGF-induced proliferation of MMP1 and MMP9 expression. The protein is Mucin-20 (MUC20) of Homo sapiens (Human).